The sequence spans 915 residues: Copper-exporting P-type ATPase (915 aa).

2 consecutive HMA domains span residues Asn11 to Gly72 and Thr73 to Ile134. Residues Cys22, Cys25, Cys84, and Cys87 each contribute to the Cu(+) site. Positions Phe142–Ala169 are disordered. Polar residues predominate over residues Ala158–Ala169. In terms of domain architecture, HMA 3 spans Gln172 to Glu236. Cys183 and Cys186 together coordinate Cu(+). A run of 7 helical transmembrane segments spans residues Leu265–Ile285, Val293–Phe313, Thr329–Pro349, Val359–Thr379, Leu474–Val494, Val514–Gly534, and Tyr541–Ala561. Residue Asp598 is the 4-aspartylphosphate intermediate of the active site. Mg(2+) contacts are provided by Asp796 and Asp800. The next 2 membrane-spanning stretches (helical) occupy residues Ala801 to Ile821 and Ile865 to Ala885.

This sequence belongs to the cation transport ATPase (P-type) (TC 3.A.3) family. Type IB subfamily.

Its subcellular location is the cell membrane. The enzyme catalyses Cu(+)(in) + ATP + H2O = Cu(+)(out) + ADP + phosphate + H(+). Functionally, involved in copper export. This Vibrio cholerae serotype O1 (strain ATCC 39315 / El Tor Inaba N16961) protein is Copper-exporting P-type ATPase (copA).